The chain runs to 919 residues: GPI ethanolamine phosphate transferase 1 (919 aa).

Over 1–8 (MWSRHRLY) the chain is Cytoplasmic. The helical transmembrane segment at 9–29 (FIVAGVLFHLFYLWSIFDIYF) threads the bilayer. Residues 30–456 (VSPLVHGMKQ…TTYNWRFIRT (427 aa)) are Lumenal-facing. N-linked (GlcNAc...) asparagine glycans are attached at residues Asn138, Asn196, Asn201, Asn285, and Asn311. A helical membrane pass occupies residues 457–477 (IVTLGFLGWIVYSFSIFLRLF). Residues 478 to 487 (ILNRDYNSHK) lie on the Cytoplasmic side of the membrane. Residues 488–508 (SLLNYFIFGSLTIILNYVLYY) traverse the membrane as a helical segment. The Lumenal segment spans residues 509–510 (QK). Residues 511 to 531 (APFNYYMYLFFPLIFWSEIFT) form a helical membrane-spanning segment. Topologically, residues 532-558 (DRVVLDDGVKEFLKGISIPKRIILVSA) are cytoplasmic. The helical transmembrane segment at 559-579 (IILVYESIVYAFFDRWIFSLI) threads the bilayer. The Lumenal segment spans residues 580–598 (FNMLSFYPLICGYRDWKRN). Residues 599-619 (TLWFITGAAISVFTLLDAVKI) traverse the membrane as a helical segment. Position 620 (Glu620) is a topological domain, cytoplasmic. Residues 621–641 (SLTQINIASGLIVLTALSGFL) traverse the membrane as a helical segment. Topologically, residues 642–653 (HLRKQLNSYTTT) are lumenal. A helical membrane pass occupies residues 654-674 (VFICQILLVILMVLATNKSIV). Residues 675–686 (SLQNRTGLPRDA) are Cytoplasmic-facing. A helical membrane pass occupies residues 687 to 707 (QVAGWVILVVSLLLMPLIHYM). At 708-718 (KPNNNYKVRML) the chain is on the lumenal side. The helical transmembrane segment at 719–739 (IIFLTFAPTFIILTISFESFF) threads the bilayer. Over 740–773 (YLVFSAYIVQWIEIESKLKEQTPNTSHYKQLIRV) the chain is Cytoplasmic. Residues 774–794 (TIIGFFLLQNAFFGTGNVASI) traverse the membrane as a helical segment. At 795 to 815 (SSFSLDSVYRLMPIFDPFPMG) the chain is on the lumenal side. Residues 816-836 (ALLVIKLIIPYIILSAGLGIL) traverse the membrane as a helical segment. Residues 837–845 (NLKLHIKDY) are Cytoplasmic-facing. A helical membrane pass occupies residues 846–866 (TISTLIISTSDILSLNFFYLL). At 867–882 (KTEGSWLDIGITISNY) the chain is on the lumenal side. Residues 883–903 (CLAILSSLFMLILEIVAHVVL) traverse the membrane as a helical segment. At 904 to 919 (KNVQLSKPVIASKKTN) the chain is on the cytoplasmic side.

The protein belongs to the PIGG/PIGN/PIGO family. PIGN subfamily.

Its subcellular location is the endoplasmic reticulum membrane. The protein operates within glycolipid biosynthesis; glycosylphosphatidylinositol-anchor biosynthesis. In terms of biological role, ethanolamine phosphate transferase involved in glycosylphosphatidylinositol-anchor biosynthesis. Transfers ethanolamine phosphate to the first alpha-1,4-linked mannose of the glycosylphosphatidylinositol precursor of GPI-anchor. The chain is GPI ethanolamine phosphate transferase 1 (MCD4) from Kluyveromyces lactis (strain ATCC 8585 / CBS 2359 / DSM 70799 / NBRC 1267 / NRRL Y-1140 / WM37) (Yeast).